The chain runs to 361 residues: Protein SGT1 homolog (361 aa).

TPR repeat units lie at residues 3–36 (ASDLESKAKEAFVDDDFELAAELYTQAIDAGPAT), 37–70 (ADLYADRAQAHIKLGNYTEAVADANKAIGLDPTM), and 71–104 (HKAYYRKGAACIKLEEYQTAKAALELGSSYAPGD). A Phosphothreonine modification is found at threonine 150. Residues 159 to 248 (KPKYRHDYYN…AEQVTWTTLD (90 aa)) enclose the CS domain. Residues 255–295 (AIPQKISTPAETAPRPSYPSSKSKKDWDKLEAEVKKEEKEE) form a disordered region. Position 262 is a phosphothreonine (threonine 262). Positions 271–361 (SYPSSKSKKD…DGMELKKWEI (91 aa)) constitute an SGS domain. A compositionally biased stretch (basic and acidic residues) spans 277-295 (SKKDWDKLEAEVKKEEKEE).

Belongs to the SGT1 family. Post-translationally, constitutively phosphorylated at Thr-262 and phosphorylated at Thr-150 upon infection with the fungal pathogen Ustilago maydis.

The protein resides in the cytoplasm. Its subcellular location is the nucleus. Its function is as follows. May act as positive regulator of basal defense. May be involved in basal disease resistance to the fungal pathogen Ustilago maydis. The protein is Protein SGT1 homolog of Zea mays (Maize).